Consider the following 305-residue polypeptide: Alpha-N-acetylgalactosaminide alpha-2,6-sialyltransferase 3 (305 aa).

Residues 1 to 8 (MACILKRK) are Cytoplasmic-facing. A helical; Signal-anchor for type II membrane protein membrane pass occupies residues 9 to 28 (PVLVVSFIALCILLLAMRLV). The Lumenal segment spans residues 29 to 305 (NDATFPLLLN…VFTHPNWTLS (277 aa)). Cys-80 and Cys-229 form a disulfide bridge. N-linked (GlcNAc...) asparagine glycosylation is found at Asn-239 and Asn-301.

The protein belongs to the glycosyltransferase 29 family. As to expression, in adult tissues, high expression in brain, lung and heart and to a lesser extent in kidney, mammary gland, spleen, testis and thymus.

The protein resides in the golgi apparatus membrane. It carries out the reaction an alpha-Neu5Ac-(2-&gt;3)-beta-D-Gal-(1-&gt;3)-D-GlcNAc derivative + CMP-N-acetyl-beta-neuraminate = an alpha-Neu5Ac-(2-&gt;3)-beta-D-Gal-(1-&gt;3)-[alpha-Neu5Ac-(2-&gt;6)]-D-GlcNAc derivative + CMP + H(+). It catalyses the reaction a ganglioside GM1b (d18:1(4E)) + CMP-N-acetyl-beta-neuraminate = a ganglioside GD1alpha (d18:1(4E)) + CMP + H(+). The catalysed reaction is a globoside MSGG + CMP-N-acetyl-beta-neuraminate = a globoside DSGG + CMP + H(+). The enzyme catalyses 3-O-[alpha-Neu5Ac-(2-&gt;3)-beta-D-Gal-(1-&gt;3)-alpha-D-GalNAc]-L-Ser-[protein] + CMP-N-acetyl-beta-neuraminate = a 3-O-{alpha-Neu5Ac-(2-&gt;3)-beta-D-Gal-(1-&gt;3)-[alpha-Neu5Ac-(2-&gt;6)]-alpha-D-GalNAc}-L-seryl-[protein] + CMP + H(+). It carries out the reaction 3-O-[alpha-Neu5Ac-(2-&gt;3)-beta-D-Gal-(1-&gt;3)-alpha-D-GalNAc]-L-Thr-[protein] + CMP-N-acetyl-beta-neuraminate = a 3-O-{alpha-Neu5Ac-(2-&gt;3)-beta-D-Gal-(1-&gt;3)-[alpha-Neu5Ac-(2-&gt;6)]-alpha-D-GalNAc}-L-threonyl-[protein] + CMP + H(+). It functions in the pathway protein modification; protein glycosylation. Its pathway is glycolipid biosynthesis. Functionally, transfers the sialyl group (N-acetyl-alpha-neuraminyl or NeuAc) from CMP-NeuAc to the GalNAc residue on the NeuAc-alpha-2,3-Gal-beta-1,3-GalNAc sequence of glycoproteins and glycolipids forming an alpha-2,6-linkage. Produces branched type disialyl structures by transfer of a sialyl group onto a GalNAc residue inside the backbone core chains. ST6GalNAcIII prefers glycolipids to glycoproteins, predominantly catalyzing the biosynthesis of ganglioside GD1alpha from GM1b. GD1alpha is a critical molecule in the communication and interaction between neuronal cells and their supportive cells, particularly in brain tissues, and functions as an adhesion molecule in the process of metastasis. Sialylation of glycoproteins or glycosphingolipids is very important in tumor development, neuronal development, nerve repair, immunological processes and regulation of hormone sensitivity. This is Alpha-N-acetylgalactosaminide alpha-2,6-sialyltransferase 3 (St6galnac3) from Mus musculus (Mouse).